A 37-amino-acid polypeptide reads, in one-letter code: Neuropeptide Y2-like conopeptide (37 aa).

At Tyr37 the chain carries Tyrosine amide.

The protein belongs to the NPY family. Expressed by the venom duct.

The protein resides in the secreted. Causes hyperactivity such as jumping, rapid circling and tail flicking, after intraventicular injection into mouse brain. The protein is Neuropeptide Y2-like conopeptide of Conus betulinus (Beech cone).